A 196-amino-acid chain; its full sequence is Orotate phosphoribosyltransferase (196 aa).

117–125 (EDIVTTGLS) provides a ligand contact to 5-phospho-alpha-D-ribose 1-diphosphate. Orotate is bound by residues T121 and R149.

It belongs to the purine/pyrimidine phosphoribosyltransferase family. PyrE subfamily. As to quaternary structure, homodimer. Mg(2+) is required as a cofactor.

It carries out the reaction orotidine 5'-phosphate + diphosphate = orotate + 5-phospho-alpha-D-ribose 1-diphosphate. It participates in pyrimidine metabolism; UMP biosynthesis via de novo pathway; UMP from orotate: step 1/2. Catalyzes the transfer of a ribosyl phosphate group from 5-phosphoribose 1-diphosphate to orotate, leading to the formation of orotidine monophosphate (OMP). The polypeptide is Orotate phosphoribosyltransferase (Methylorubrum extorquens (strain PA1) (Methylobacterium extorquens)).